The following is a 179-amino-acid chain: Endoribonuclease YbeY (179 aa).

Positions 148, 152, and 158 each coordinate Zn(2+).

Belongs to the endoribonuclease YbeY family. Requires Zn(2+) as cofactor.

The protein localises to the cytoplasm. Its function is as follows. Single strand-specific metallo-endoribonuclease involved in late-stage 70S ribosome quality control and in maturation of the 3' terminus of the 16S rRNA. This is Endoribonuclease YbeY from Prochlorococcus marinus (strain AS9601).